A 1286-amino-acid chain; its full sequence is X-linked retinitis pigmentosa GTPase regulator-interacting protein 1 (1286 aa).

Residues 144–193 (QVGHRQLHTAGAPVPEKPKRGPRDRLSYTAPPSFKEHATNENRGEVASKP) are disordered. 2 stretches are compositionally biased toward basic and acidic residues: residues 159-169 (EKPKRGPRDRL) and 177-189 (FKEH…RGEV). The stretch at 294–584 (KAQLTEVQEA…LEGILRSHDL (291 aa)) forms a coiled coil. The C2 domain occupies 781–906 (GGRKAQEEEF…AKNESIKGDF (126 aa)). 2 disordered regions span residues 934–1008 (SFLK…RKHG) and 1058–1108 (EEEE…PMSQ). Composition is skewed to basic and acidic residues over residues 940 to 960 (AQTK…EEKA), 988 to 998 (HGGERKEKEHQ), and 1070 to 1084 (KQKE…KESS). The segment covering 1085-1096 (EQGSEVSEAQTT) has biased composition (polar residues). An interaction with RPGR region spans residues 1091 to 1281 (SEAQTTDSDD…VLHAIYKEMT (191 aa)).

This sequence belongs to the RPGRIP1 family. Forms homodimers and elongated homopolymers. Interacts with RPGR. Interacts with NPHP4. Interacts with NEK4. Interacts with SPATA7. Interacts with CEP290/NPHP6; mediating the association between RPGR and CEP290/NPHP6. In terms of tissue distribution, strong expression in retina, with weaker expression in testis. Expressed in other neurons such as amacrine cells. Colocalizes with RGPR in the outer segment of rod photoreceptors and cone outer segments.

It localises to the cell projection. It is found in the cilium. May function as scaffolding protein. Required for normal location of RPGR at the connecting cilium of photoreceptor cells. Required for normal disk morphogenesis and disk organization in the outer segment of photoreceptor cells and for survival of photoreceptor cells. This Homo sapiens (Human) protein is X-linked retinitis pigmentosa GTPase regulator-interacting protein 1 (RPGRIP1).